The following is a 499-amino-acid chain: Glutamyl-tRNA(Gln) amidotransferase subunit B, chloroplastic/mitochondrial (499 aa).

The protein belongs to the GatB/GatE family. GatB subfamily. As to quaternary structure, subunit of the heterotrimeric GatCAB amidotransferase (AdT) complex, composed of A, B and C subunits.

Its subcellular location is the mitochondrion. The protein localises to the plastid. The protein resides in the chloroplast. It catalyses the reaction L-glutamyl-tRNA(Gln) + L-glutamine + ATP + H2O = L-glutaminyl-tRNA(Gln) + L-glutamate + ADP + phosphate + H(+). In terms of biological role, allows the formation of correctly charged Gln-tRNA(Gln) through the transamidation of misacylated Glu-tRNA(Gln) in chloroplasts and mitochondria. The reaction takes place in the presence of glutamine and ATP through an activated gamma-phospho-Glu-tRNA(Gln). The polypeptide is Glutamyl-tRNA(Gln) amidotransferase subunit B, chloroplastic/mitochondrial (Ostreococcus lucimarinus (strain CCE9901)).